Here is a 389-residue protein sequence, read N- to C-terminus: Histidinol-phosphate aminotransferase (389 aa).

Lys-233 is subject to N6-(pyridoxal phosphate)lysine.

This sequence belongs to the class-II pyridoxal-phosphate-dependent aminotransferase family. Pyridoxal 5'-phosphate serves as cofactor.

The enzyme catalyses L-histidinol phosphate + 2-oxoglutarate = 3-(imidazol-4-yl)-2-oxopropyl phosphate + L-glutamate. It functions in the pathway amino-acid biosynthesis; L-histidine biosynthesis; L-histidine from 5-phospho-alpha-D-ribose 1-diphosphate: step 7/9. The sequence is that of Histidinol-phosphate aminotransferase (HIS5) from Candida maltosa (Yeast).